A 184-amino-acid polypeptide reads, in one-letter code: UPF0149 protein PSPTO_5224 (184 aa).

Belongs to the UPF0149 family.

This chain is UPF0149 protein PSPTO_5224, found in Pseudomonas syringae pv. tomato (strain ATCC BAA-871 / DC3000).